A 1101-amino-acid chain; its full sequence is ATP-dependent DNA helicase mph1 (1101 aa).

4 disordered regions span residues 22 to 59, 95 to 138, 154 to 231, and 250 to 270; these read PGTS…SPDR, LTQP…QYHD, FEEE…TNRP, and SSQR…PTHH. Residues 24-48 show a composition bias toward polar residues; the sequence is TSDTVESVQTNNRPAKQSDISISQG. Residues 170–190 show a composition bias toward low complexity; the sequence is TPARTAAAPCAAPKGTAADVP. Residues 191 to 202 show a composition bias toward acidic residues; sequence FDLDDIPDDAFD. A compositionally biased stretch (polar residues) spans 209–228; sequence PPRSTSQATRGPPVQSQFRT. The region spanning 296 to 464 is the Helicase ATP-binding domain; sequence IAQRGLFHNL…AIIDDLGIAK (169 aa). 309-316 provides a ligand contact to ATP; sequence LPTGLGKT. Positions 412-415 match the DEAH box motif; sequence DEAH. The Helicase C-terminal domain occupies 634–808; the sequence is YLKQVVLNHF…GTRFTFHDDK (175 aa). Disordered stretches follow at residues 824 to 890 and 991 to 1067; these read RQID…PTPE and SRDP…QDAF. Positions 842–854 are enriched in basic residues; sequence RRARPPKRPPKKF.

The protein belongs to the DEAD box helicase family. DEAH subfamily. FANCM sub-subfamily. As to quaternary structure, interacts with the MHF histone-fold complex to form the FANCM-MHF complex.

The protein localises to the nucleus. The enzyme catalyses ATP + H2O = ADP + phosphate + H(+). ATP-dependent DNA helicase involved in DNA damage repair by homologous recombination and in genome maintenance. Capable of unwinding D-loops. Plays a role in limiting crossover recombinants during mitotic DNA double-strand break (DSB) repair. Component of a FANCM-MHF complex which promotes gene conversion at blocked replication forks, probably by reversal of the stalled fork. This chain is ATP-dependent DNA helicase mph1, found in Aspergillus fumigatus (strain CBS 144.89 / FGSC A1163 / CEA10) (Neosartorya fumigata).